A 71-amino-acid chain; its full sequence is Sec-independent protein translocase protein TatA (71 aa).

Residues 1–21 (MGASPVQLLIVLFIAVLVFGG) form a helical membrane-spanning segment.

The protein belongs to the TatA/E family. In terms of assembly, the Tat system comprises two distinct complexes: a TatABC complex, containing multiple copies of TatA, TatB and TatC subunits, and a separate TatA complex, containing only TatA subunits. Substrates initially bind to the TatABC complex, which probably triggers association of the separate TatA complex to form the active translocon.

It localises to the cell inner membrane. In terms of biological role, part of the twin-arginine translocation (Tat) system that transports large folded proteins containing a characteristic twin-arginine motif in their signal peptide across membranes. TatA could form the protein-conducting channel of the Tat system. This chain is Sec-independent protein translocase protein TatA, found in Dichelobacter nodosus (strain VCS1703A).